The chain runs to 231 residues: 7-cyano-7-deazaguanine synthase (231 aa).

17–27 (FSGGMDSFTLL) serves as a coordination point for ATP. Zn(2+) contacts are provided by cysteine 193, cysteine 201, cysteine 204, and cysteine 207.

Belongs to the QueC family. The cofactor is Zn(2+).

The enzyme catalyses 7-carboxy-7-deazaguanine + NH4(+) + ATP = 7-cyano-7-deazaguanine + ADP + phosphate + H2O + H(+). Its pathway is purine metabolism; 7-cyano-7-deazaguanine biosynthesis. Its function is as follows. Catalyzes the ATP-dependent conversion of 7-carboxy-7-deazaguanine (CDG) to 7-cyano-7-deazaguanine (preQ(0)). The sequence is that of 7-cyano-7-deazaguanine synthase from Hahella chejuensis (strain KCTC 2396).